Consider the following 270-residue polypeptide: Putative tRNA (cytidine(32)/guanosine(34)-2'-O)-methyltransferase (270 aa).

Residues glycine 53, tryptophan 55, aspartate 78, aspartate 94, and aspartate 119 each contribute to the S-adenosyl-L-methionine site. Lysine 159 (proton acceptor) is an active-site residue.

The protein belongs to the class I-like SAM-binding methyltransferase superfamily. RNA methyltransferase RlmE family. TRM7 subfamily.

The protein localises to the cytoplasm. It carries out the reaction cytidine(32)/guanosine(34) in tRNA + 2 S-adenosyl-L-methionine = 2'-O-methylcytidine(32)/2'-O-methylguanosine(34) in tRNA + 2 S-adenosyl-L-homocysteine + 2 H(+). In terms of biological role, methylates the 2'-O-ribose of nucleotides at positions 32 and 34 of the tRNA anticodon loop of substrate tRNAs. This is Putative tRNA (cytidine(32)/guanosine(34)-2'-O)-methyltransferase (fsjA) from Dictyostelium discoideum (Social amoeba).